The primary structure comprises 2363 residues: Highly reducing polyketide synthase cnsI (2363 aa).

The 427-residue stretch at 14 to 440 (PEPIAIIGMS…GSNAHAIVES (427 aa)) folds into the Ketosynthase family 3 (KS3) domain. Residues C187, H322, and H363 each act as for beta-ketoacyl synthase activity in the active site. Residues 546–854 (LAFVFTGQGA…FLQVLKSINA (309 aa)) are malonyl-CoA:ACP transacylase (MAT) domain. The active-site For malonyltransferase activity is the S638. Residues 938-1068 (HDLLGSPMDF…GTFTLHYDAR (131 aa)) are N-terminal hotdog fold. Positions 938–1224 (HDLLGSPMDF…RLDSIASDVS (287 aa)) are dehydratase (DH) domain. The PKS/mFAS DH domain occupies 938-1246 (HDLLGSPMDF…LGPVPMSKVP (309 aa)). H970 functions as the Proton acceptor; for dehydratase activity in the catalytic mechanism. The C-terminal hotdog fold stretch occupies residues 1089 to 1246 (TAECETNRDA…LGPVPMSKVP (158 aa)). D1159 (proton donor; for dehydratase activity) is an active-site residue. An enoylreductase (ER) domain region spans residues 1669 to 1976 (GGQWVEDRQL…ARQTGISVAI (308 aa)). A catalytic ketoreductase (KRc) domain region spans residues 2001–2177 (TYLLAGGLGM…PGHSIDIGLV (177 aa)). A Carrier domain is found at 2279 to 2357 (EDASYVVNQA…VLSEKIAAQS (79 aa)). At S2317 the chain carries O-(pantetheine 4'-phosphoryl)serine.

It functions in the pathway alkaloid biosynthesis. Highly reducing polyketide synthase; part of the gene cluster that mediates the biosynthesis of communesins, a prominent class of indole alkaloids with great potential as pharmaceuticals. Communesins are biosynthesized by the coupling of tryptamine and aurantioclavine, two building blocks derived from L-tryptophan. The L-tryptophan decarboxylase cnsB converts L-tryptophan to tryptamine, whereas the tryptophan dimethylallyltransferase cnsF converts L-tryptophan to 4-dimethylallyl tryptophan which is further transformed to aurantioclavine by the aurantioclavine synthase cnsA, probably aided by the catalase cnsD. The cytochrome P450 monooxygenase cnsC catalyzes the heterodimeric coupling between the two different indole moieties, tryptamine and aurantioclavine, to construct vicinal quaternary stereocenters and yield the heptacyclic communesin scaffold. The O-methyltransferase cnsE then methylates the communesin scaffold to produce communesin K, the simplest characterized communesin that contains the heptacyclic core. The dioxygenase cnsJ converts communesin K into communesin I. Acylation to introduce the hexadienyl group at position N16 of communesin I by the acyltransferase cnsK leads to the production of communesin B. The hexadienyl group is produced by the highly reducing polyketide synthase cnsI, before being hydrolytically removed from cnsI by the serine hydrolase cnsH, converted into hexadienyl-CoA by the CoA ligase cnsG, and then transferred to communesin I by cnsK. Surprisingly, cnsK may also be a promiscuous acyltransferase that can tolerate a range of acyl groups, including acetyl-, propionyl-, and butyryl-CoA, which lead to communesins A, G and H respectively. The roles of the alpha-ketoglutarate-dependent dioxygenases cnsM and cnsP have still to be determined. The protein is Highly reducing polyketide synthase cnsI of Penicillium expansum (Blue mold rot fungus).